Reading from the N-terminus, the 248-residue chain is 1-(5-phosphoribosyl)-5-[(5-phosphoribosylamino)methylideneamino] imidazole-4-carboxamide isomerase (248 aa).

The active-site Proton acceptor is Asp-8. Asp-131 (proton donor) is an active-site residue.

Belongs to the HisA/HisF family.

It localises to the cytoplasm. The catalysed reaction is 1-(5-phospho-beta-D-ribosyl)-5-[(5-phospho-beta-D-ribosylamino)methylideneamino]imidazole-4-carboxamide = 5-[(5-phospho-1-deoxy-D-ribulos-1-ylimino)methylamino]-1-(5-phospho-beta-D-ribosyl)imidazole-4-carboxamide. It participates in amino-acid biosynthesis; L-histidine biosynthesis; L-histidine from 5-phospho-alpha-D-ribose 1-diphosphate: step 4/9. The polypeptide is 1-(5-phosphoribosyl)-5-[(5-phosphoribosylamino)methylideneamino] imidazole-4-carboxamide isomerase (Paracidovorax citrulli (strain AAC00-1) (Acidovorax citrulli)).